The following is a 501-amino-acid chain: Ammonium transporter 1 member 1 (501 aa).

10 consecutive transmembrane segments (helical) span residues 8-28 (LAVL…GQLG), 46-66 (LLFS…LCAG), 81-101 (VLDA…FAFG), 128-148 (FLYQ…SIAE), 152-172 (FVAY…VVSH), 199-219 (FAGS…GALI), 243-263 (LVVL…PGSF), 333-353 (VVEP…LLGC), 366-386 (LEAA…TALF), and 419-439 (LIQI…LFFI). The residue at position 460 (threonine 460) is a Phosphothreonine. Serine 475, serine 488, serine 490, and serine 492 each carry phosphoserine.

Belongs to the ammonia transporter channel (TC 1.A.11.2) family. Self interacts. Interacts with the receptor protein kinases CEPR2, At2g28990 and PAM74. In terms of tissue distribution, highly expressed in roots. Expressed in root tips, root hairs, root epidermis, rhizodermis, cortex and pericycle. Expressed in leaves epidermal and mesophyll cells.

The protein resides in the cell membrane. Functionally, high affinity ammonium transporter probably involved in ammonium uptake from the soil, long-distance transport to the shoots and re-uptake of apoplastic ammonium that derives from photorespiration in shoots. Contributes with AMT1-3 to the overall ammonium uptake capacity in roots under nitrogen-deficiency conditions. The chain is Ammonium transporter 1 member 1 (AMT1-1) from Arabidopsis thaliana (Mouse-ear cress).